Here is a 303-residue protein sequence, read N- to C-terminus: Oxygen-dependent coproporphyrinogen-III oxidase (303 aa).

S93 is a substrate binding site. A divalent metal cation-binding residues include H97 and H107. The active-site Proton donor is H107. 109–111 (NVR) is a substrate binding site. Residues H149 and H179 each coordinate a divalent metal cation. Positions 244 to 279 (YVEFNLVFDRGTLFGLQSGGRTESILLSMPPMAQWR) are important for dimerization. 262–264 (GGR) contacts substrate.

Belongs to the aerobic coproporphyrinogen-III oxidase family. Homodimer. Requires a divalent metal cation as cofactor.

It is found in the cytoplasm. The catalysed reaction is coproporphyrinogen III + O2 + 2 H(+) = protoporphyrinogen IX + 2 CO2 + 2 H2O. The protein operates within porphyrin-containing compound metabolism; protoporphyrin-IX biosynthesis; protoporphyrinogen-IX from coproporphyrinogen-III (O2 route): step 1/1. In terms of biological role, involved in the heme biosynthesis. Catalyzes the aerobic oxidative decarboxylation of propionate groups of rings A and B of coproporphyrinogen-III to yield the vinyl groups in protoporphyrinogen-IX. The protein is Oxygen-dependent coproporphyrinogen-III oxidase of Bordetella petrii (strain ATCC BAA-461 / DSM 12804 / CCUG 43448).